A 129-amino-acid polypeptide reads, in one-letter code: Glycine cleavage system H protein (129 aa).

Positions Thr24–Lys106 constitute a Lipoyl-binding domain. Position 65 is an N6-lipoyllysine (Lys65).

The protein belongs to the GcvH family. As to quaternary structure, the glycine cleavage system is composed of four proteins: P, T, L and H. Requires (R)-lipoate as cofactor.

In terms of biological role, the glycine cleavage system catalyzes the degradation of glycine. The H protein shuttles the methylamine group of glycine from the P protein to the T protein. The protein is Glycine cleavage system H protein of Escherichia fergusonii (strain ATCC 35469 / DSM 13698 / CCUG 18766 / IAM 14443 / JCM 21226 / LMG 7866 / NBRC 102419 / NCTC 12128 / CDC 0568-73).